Consider the following 48-residue polypeptide: Large ribosomal subunit protein bL32 (48 aa).

Residues 28–48 are disordered; it reads VKDKDGSWKMPHRINKTTGEY.

The protein belongs to the bacterial ribosomal protein bL32 family.

The protein is Large ribosomal subunit protein bL32 of Campylobacter concisus (strain 13826).